The sequence spans 248 residues: Pyridoxine 5'-phosphate synthase (248 aa).

Residue Asn-12 coordinates 3-amino-2-oxopropyl phosphate. Residue 14–15 (DH) coordinates 1-deoxy-D-xylulose 5-phosphate. Arg-23 lines the 3-amino-2-oxopropyl phosphate pocket. The active-site Proton acceptor is His-48. 2 residues coordinate 1-deoxy-D-xylulose 5-phosphate: Arg-50 and His-55. Glu-75 serves as the catalytic Proton acceptor. Thr-105 contacts 1-deoxy-D-xylulose 5-phosphate. His-196 acts as the Proton donor in catalysis. 3-amino-2-oxopropyl phosphate is bound by residues Gly-197 and 218–219 (GH).

The protein belongs to the PNP synthase family. As to quaternary structure, homooctamer; tetramer of dimers.

The protein localises to the cytoplasm. The catalysed reaction is 3-amino-2-oxopropyl phosphate + 1-deoxy-D-xylulose 5-phosphate = pyridoxine 5'-phosphate + phosphate + 2 H2O + H(+). It functions in the pathway cofactor biosynthesis; pyridoxine 5'-phosphate biosynthesis; pyridoxine 5'-phosphate from D-erythrose 4-phosphate: step 5/5. Catalyzes the complicated ring closure reaction between the two acyclic compounds 1-deoxy-D-xylulose-5-phosphate (DXP) and 3-amino-2-oxopropyl phosphate (1-amino-acetone-3-phosphate or AAP) to form pyridoxine 5'-phosphate (PNP) and inorganic phosphate. The polypeptide is Pyridoxine 5'-phosphate synthase (Pseudomonas fluorescens (strain ATCC BAA-477 / NRRL B-23932 / Pf-5)).